The chain runs to 553 residues: ATP synthase F(1) complex subunit alpha, mitochondrial (553 aa).

The transit peptide at 1–43 (MLSVRIAAAVARALPRRAGLVSKNALGSSFVGTRNLHASNTRL) directs the protein to the mitochondrion. Residues Ser53 and Ser65 each carry the phosphoserine modification. Ser76 carries the phosphoserine; alternate modification. An O-linked (GlcNAc) serine; alternate glycan is attached at Ser76. Ser106 carries the phosphoserine modification. 3 positions are modified to N6-acetyllysine: Lys123, Lys126, and Lys132. Residue Thr134 is modified to Phosphothreonine. Lys161 is modified (N6-acetyllysine; alternate). Position 161 is an N6-succinyllysine; alternate (Lys161). Ser166 is modified (phosphoserine). Lys167 carries the post-translational modification N6-acetyllysine; alternate. N6-succinyllysine; alternate is present on Lys167. Ser184 carries the post-translational modification Phosphoserine. Position 204 is an omega-N-methylarginine (Arg204). 5 residues coordinate ATP: Gln215, Gly217, Lys218, Thr219, and Ser220. Thr219 contacts Mg(2+). Residues Lys230 and Lys239 each carry the N6-acetyllysine; alternate modification. An N6-succinyllysine; alternate mark is found at Lys230 and Lys239. Position 240 is an N6-acetyllysine (Lys240). 2 positions are modified to N6-acetyllysine; alternate: Lys261 and Lys305. N6-succinyllysine; alternate is present on residues Lys261 and Lys305. Asp312 is a Mg(2+) binding site. Lys427 carries the post-translational modification N6-acetyllysine; alternate. At Lys427 the chain carries N6-succinyllysine; alternate. N6-acetyllysine is present on Lys434. Residues Gln473 and Gln475 each coordinate ATP. Lys498, Lys506, Lys531, and Lys539 each carry N6-acetyllysine; alternate. An N6-succinyllysine; alternate mark is found at Lys498, Lys506, Lys531, and Lys539. Position 541 is an N6-acetyllysine (Lys541).

The protein belongs to the ATPase alpha/beta chains family. As to quaternary structure, homotrimer. Component of the ATP synthase complex composed at least of ATP5F1A/subunit alpha, ATP5F1B/subunit beta, ATP5MC1/subunit c (homooctomer), MT-ATP6/subunit a, MT-ATP8/subunit 8, ATP5ME/subunit e, ATP5MF/subunit f, ATP5MG/subunit g, ATP5MK/subunit k, ATP5MJ/subunit j, ATP5F1C/subunit gamma, ATP5F1D/subunit delta, ATP5F1E/subunit epsilon, ATP5PF/subunit F6, ATP5PB/subunit b, ATP5PD/subunit d, ATP5PO/subunit OSCP. ATP synthase complex consists of a soluble F(1) head domain (subunits alpha(3) and beta(3)) - the catalytic core - and a membrane F(0) domain - the membrane proton channel (subunits c, a, 8, e, f, g, k and j). These two domains are linked by a central stalk (subunits gamma, delta, and epsilon) rotating inside the F1 region and a stationary peripheral stalk (subunits F6, b, d, and OSCP). Interacts with ATPAF2. Interacts with HRG; the interaction occurs on the surface of T-cells and alters the cell morphology when associated with concanavalin (in vitro). Interacts with PLG (angiostatin peptide); the interaction inhibits most of the angiogenic properties of angiostatin. Interacts with BLOC1S1. Interacts with BCL2L1 isoform BCL-X(L); the interaction mediates the association of BCL2L1 isoform BCL-X(L) with the mitochondrial membrane F(1)F(0) ATP synthase and enhances neurons metabolic efficiency. Interacts with CLN5 and PPT1. Interacts with S100A1; this interaction increases F1-ATPase activity. Interacts with ABCB7; this interaction allows the regulation of cellular iron homeostasis and cellular reactive oxygen species (ROS) levels in cardiomyocytes. In terms of processing, acetylated on lysine residues. BLOC1S1 is required for acetylation. Expressed in flagella of epididymal sperm.

It localises to the mitochondrion. Its subcellular location is the mitochondrion inner membrane. The protein localises to the cell membrane. Subunit alpha, of the mitochondrial membrane ATP synthase complex (F(1)F(0) ATP synthase or Complex V) that produces ATP from ADP in the presence of a proton gradient across the membrane which is generated by electron transport complexes of the respiratory chain. ATP synthase complex consist of a soluble F(1) head domain - the catalytic core - and a membrane F(1) domain - the membrane proton channel. These two domains are linked by a central stalk rotating inside the F(1) region and a stationary peripheral stalk. During catalysis, ATP synthesis in the catalytic domain of F(1) is coupled via a rotary mechanism of the central stalk subunits to proton translocation. In vivo, can only synthesize ATP although its ATP hydrolase activity can be activated artificially in vitro. With the catalytic subunit beta (ATP5F1B), forms the catalytic core in the F(1) domain. Subunit alpha does not bear the catalytic high-affinity ATP-binding sites. This Rattus norvegicus (Rat) protein is ATP synthase F(1) complex subunit alpha, mitochondrial.